The primary structure comprises 218 residues: uncharacterized protein (218 aa).

Positions 7–123 constitute a Response regulatory domain; sequence RVALADDQPL…ELIDAIRAAA (117 aa). Aspartate 58 bears the 4-aspartylphosphate mark. Residues 150 to 215 enclose the HTH luxR-type domain; it reads AEELAEPFTK…QAVVFAIRNG (66 aa). The segment at residues 174–193 is a DNA-binding region (H-T-H motif); it reads NEDIAEKLFVSESTVKTHVH.

Post-translationally, phosphorylated by YxjM.

It is found in the cytoplasm. Its function is as follows. Probable member of the two-component regulatory system YxjM/YxjL. This is an uncharacterized protein from Bacillus subtilis (strain 168).